Consider the following 212-residue polypeptide: Small ribosomal subunit protein uS5 (212 aa).

The disordered stretch occupies residues 1–42 (MPGRERRDGGRSADKNDNNKGRNDRGRNDRNNRRGRGRDDDR). An S5 DRBM domain is found at 45–108 (YIERVVTINR…EEARKNFFRV (64 aa)).

It belongs to the universal ribosomal protein uS5 family. As to quaternary structure, part of the 30S ribosomal subunit. Contacts proteins S4 and S8.

Its function is as follows. With S4 and S12 plays an important role in translational accuracy. Located at the back of the 30S subunit body where it stabilizes the conformation of the head with respect to the body. This is Small ribosomal subunit protein uS5 from Corynebacterium kroppenstedtii (strain DSM 44385 / JCM 11950 / CIP 105744 / CCUG 35717).